We begin with the raw amino-acid sequence, 206 residues long: Enterobactin synthase component D (206 aa).

The Mg(2+) site is built by aspartate 107, glutamate 109, and glutamate 152.

The protein belongs to the P-Pant transferase superfamily. EntD family. EntB, EntD, EntE, and EntF form a multienzyme complex called enterobactin synthase. Mg(2+) serves as cofactor.

The protein localises to the membrane. The catalysed reaction is apo-[aryl-carrier protein] + CoA = holo-[aryl-carrier protein] + adenosine 3',5'-bisphosphate + H(+). It carries out the reaction apo-[peptidyl-carrier protein] + CoA = holo-[peptidyl-carrier protein] + adenosine 3',5'-bisphosphate + H(+). Its pathway is siderophore biosynthesis; enterobactin biosynthesis. In terms of biological role, involved in the biosynthesis of the siderophore enterobactin (enterochelin), which is a macrocyclic trimeric lactone of N-(2,3-dihydroxybenzoyl)-serine. The serine trilactone serves as a scaffolding for the three catechol functionalities that provide hexadentate coordination for the tightly ligated iron(2+) atoms. Plays an essential role in the assembly of the enterobactin by catalyzing the transfer of the 4'-phosphopantetheine (Ppant) moiety from coenzyme A to the apo-domains of both EntB (ArCP domain) and EntF (PCP domain) to yield their holo-forms which make them competent for the activation of 2,3-dihydroxybenzoate (DHB) and L-serine, respectively. The polypeptide is Enterobactin synthase component D (Escherichia coli O157:H7).